We begin with the raw amino-acid sequence, 463 residues long: MSTSSTPPQGAWSGRFSEPVSEIVKRYTASIPFDYRLAEFDIQGSLAHAAMLHHVGVLSADDLAAIRGGMGELLEEIRAGRFAWSLDKEDVHLNIEAALTAKIGDAGKRLHTGRSRNDQVATDIRLYLRDAIDRILAGLKACQTSLVDLAEAHADTVMPGFTHLQVAQPVTFGHHLLAYFEMLARDAERMADCRRRVNRLPLGAAALAGTSYPIDRAYVARELGFEAVCENSLDAVSDRDFAIEFAAAAALVMTHLSRLSEELILWMSPRFGFIDLADRFCTGSSIMPQKKNPDVPELVRGKTGRVNGHLVALLTLMKGQPLAYNKDNQEDKEPLFDTVDTLADTLAIYADMLRGVTVKPDAMHAAVMQGFATATDLADYLVKKGLPFRDAHEVVARAVRVADESGRDLADLPLDELQTFSPIIGDDVYALLTLEGSLAARDHFGGTAPAQVRAAVARARGRL.

The protein belongs to the lyase 1 family. Argininosuccinate lyase subfamily.

It localises to the cytoplasm. It carries out the reaction 2-(N(omega)-L-arginino)succinate = fumarate + L-arginine. It participates in amino-acid biosynthesis; L-arginine biosynthesis; L-arginine from L-ornithine and carbamoyl phosphate: step 3/3. This is Argininosuccinate lyase from Thiobacillus denitrificans (strain ATCC 25259 / T1).